A 139-amino-acid polypeptide reads, in one-letter code: MAMTVHCDIVSAEGEIFSGLVEMVVAHGNLGDLGIAPGHAPLITNLKPGPITLTKQGGAQEVFYISGGFLEVQPNMVKVLADTVQRATDLDEAQAQEALKAAENALNLKGADFDYSAAAARLAEAAAQLRTVQQMRKGK.

This sequence belongs to the ATPase epsilon chain family. As to quaternary structure, F-type ATPases have 2 components, CF(1) - the catalytic core - and CF(0) - the membrane proton channel. CF(1) has five subunits: alpha(3), beta(3), gamma(1), delta(1), epsilon(1). CF(0) has three main subunits: a, b and c.

The protein localises to the cell inner membrane. Its function is as follows. Produces ATP from ADP in the presence of a proton gradient across the membrane. The chain is ATP synthase epsilon chain from Pseudomonas putida (strain ATCC 700007 / DSM 6899 / JCM 31910 / BCRC 17059 / LMG 24140 / F1).